We begin with the raw amino-acid sequence, 397 residues long: Ribosomal RNA large subunit methyltransferase I (397 aa).

Residues 2–81 enclose the PUA domain; sequence SAQVILQPSR…ESIDNGFFLR (80 aa).

This sequence belongs to the methyltransferase superfamily. RlmI family.

It localises to the cytoplasm. The catalysed reaction is cytidine(1962) in 23S rRNA + S-adenosyl-L-methionine = 5-methylcytidine(1962) in 23S rRNA + S-adenosyl-L-homocysteine + H(+). Specifically methylates the cytosine at position 1962 (m5C1962) of 23S rRNA. In Alteromonas mediterranea (strain DSM 17117 / CIP 110805 / LMG 28347 / Deep ecotype), this protein is Ribosomal RNA large subunit methyltransferase I.